Consider the following 415-residue polypeptide: Gamma-glutamyl phosphate reductase (415 aa).

It belongs to the gamma-glutamyl phosphate reductase family.

It localises to the cytoplasm. The enzyme catalyses L-glutamate 5-semialdehyde + phosphate + NADP(+) = L-glutamyl 5-phosphate + NADPH + H(+). Its pathway is amino-acid biosynthesis; L-proline biosynthesis; L-glutamate 5-semialdehyde from L-glutamate: step 2/2. Functionally, catalyzes the NADPH-dependent reduction of L-glutamate 5-phosphate into L-glutamate 5-semialdehyde and phosphate. The product spontaneously undergoes cyclization to form 1-pyrroline-5-carboxylate. The protein is Gamma-glutamyl phosphate reductase of Oceanobacillus iheyensis (strain DSM 14371 / CIP 107618 / JCM 11309 / KCTC 3954 / HTE831).